The primary structure comprises 299 residues: tRNA dimethylallyltransferase (299 aa).

13–20 (GPTASGKT) provides a ligand contact to ATP. 15–20 (TASGKT) is a substrate binding site. The segment at 38–41 (DSRQ) is interaction with substrate tRNA.

Belongs to the IPP transferase family. As to quaternary structure, monomer. Requires Mg(2+) as cofactor.

The enzyme catalyses adenosine(37) in tRNA + dimethylallyl diphosphate = N(6)-dimethylallyladenosine(37) in tRNA + diphosphate. In terms of biological role, catalyzes the transfer of a dimethylallyl group onto the adenine at position 37 in tRNAs that read codons beginning with uridine, leading to the formation of N6-(dimethylallyl)adenosine (i(6)A). In Prochlorococcus marinus (strain SARG / CCMP1375 / SS120), this protein is tRNA dimethylallyltransferase.